A 234-amino-acid polypeptide reads, in one-letter code: Zein-alpha 19B1 (234 aa).

An N-terminal signal peptide occupies residues 1–21; it reads MAAKIFCLLMLLGLSASAATA.

It belongs to the zein family.

Its function is as follows. Zeins are major seed storage proteins. The protein is Zein-alpha 19B1 of Zea mays (Maize).